The chain runs to 368 residues: Solute carrier family 35 member G1 (368 aa).

10 helical membrane passes run 72-92 (GLGLFYTVLSAFLFSVASLFV), 100-120 (AVEISAFRCVVQMLVIIPCLI), 134-154 (LFLFLRGVFGSSAMILMYYAF), 161-181 (DATVIAFSCPVFTSIFAWIFL), 190-210 (AFFTLFAIAGVILIVRPPFIF), 225-245 (IKGTFAAIGHAVLAAITLVIL), 256-276 (LSIWYYVILGLPEAIIILFVI), 289-309 (LFLILIGLLGLGGQIFITKAV), 316-336 (LVAIMKTMDIVFAFIFQIAFF), and 340-360 (PTWWTVGGALCVVVSTTGATI). EamA domains are found at residues 83 to 205 (FLFS…LIVR) and 236 to 360 (VLAA…GATI).

It belongs to the TMEM20 family. Interacts with STIM1; stimulated by depletion of intracellular calcium. Interacts with ORAI1. Interacts with the plasma membrane calcium-transporting ATPases ATP2B1 and ATP2B4. Interacts with ATP1A1, ATP2A2, KPNB1 and XPO1.

The protein localises to the cell membrane. The protein resides in the endoplasmic reticulum membrane. Its function is as follows. May play a role in intracellular calcium sensing and homeostasis. May act as a negative regulator of plasma membrane calcium-transporting ATPases preventing calcium efflux from the cell. The chain is Solute carrier family 35 member G1 (Slc35g1) from Mus musculus (Mouse).